The following is a 223-amino-acid chain: Proteasome subunit beta type-1 (223 aa).

This sequence belongs to the peptidase T1B family. In terms of assembly, the 26S proteasome consists of a 20S proteasome core and two 19S regulatory subunits. The 20S proteasome core is composed of 28 subunits that are arranged in four stacked rings, resulting in a barrel-shaped structure. The two end rings are each formed by seven alpha subunits, and the two central rings are each formed by seven beta subunits. The catalytic chamber with the active sites is on the inside of the barrel.

It localises to the cytoplasm. The protein localises to the nucleus. Functionally, non-catalytic component of the proteasome, a multicatalytic proteinase complex which is characterized by its ability to cleave peptides with Arg, Phe, Tyr, Leu, and Glu adjacent to the leaving group at neutral or slightly basic pH. The proteasome has an ATP-dependent proteolytic activity. This is Proteasome subunit beta type-1 (PBF1) from Petunia hybrida (Petunia).